The primary structure comprises 509 residues: UDP-N-acetylmuramyl-tripeptide synthetase (509 aa).

Position 124 to 130 (124 to 130 (GTNGKTS)) interacts with ATP. Residues 164 to 165 (TT), Ser191, and Arg199 each bind UDP-N-acetyl-alpha-D-muramoyl-L-alanyl-D-glutamate. Residue Lys231 is modified to N6-carboxylysine.

Belongs to the MurCDEF family. MurE subfamily. In terms of processing, carboxylation is probably crucial for Mg(2+) binding and, consequently, for the gamma-phosphate positioning of ATP.

The protein resides in the cytoplasm. Its pathway is cell wall biogenesis; peptidoglycan biosynthesis. In terms of biological role, catalyzes the addition of an amino acid to the nucleotide precursor UDP-N-acetylmuramoyl-L-alanyl-D-glutamate (UMAG) in the biosynthesis of bacterial cell-wall peptidoglycan. The sequence is that of UDP-N-acetylmuramyl-tripeptide synthetase from Tropheryma whipplei (strain TW08/27) (Whipple's bacillus).